Consider the following 1392-residue polypeptide: ATP-dependent helicase/nuclease subunit A (1392 aa).

A UvrD-like helicase ATP-binding domain is found at 3-489 (NPKWTPAQQA…IDLNQNFRSR (487 aa)). 24–31 (AAAGSGKT) contributes to the ATP binding site. 3 disordered regions span residues 291–319 (RGSKKNLPDSLIDEENSKRLREESKKARD), 556–594 (RGAEDAATGADSPAKGEGEEFEQNREPESGDDESSLEEA), and 1051–1126 (GPVQ…LDTK). Composition is skewed to basic and acidic residues over residues 305-319 (ENSKRLREESKKARD) and 569-583 (AKGEGEEFEQNREPE). Residues 556–886 (RGAEDAATGA…RFITVHSSKG (331 aa)) form the UvrD-like helicase C-terminal domain. The span at 584–594 (SGDDESSLEEA) shows a compositional bias: acidic residues. The segment covering 1088 to 1113 (ASGKTEIPGETKNSEETKTSEDKKNL) has biased composition (basic and acidic residues).

It belongs to the helicase family. AddA subfamily. As to quaternary structure, heterodimer of AddA and AddB/RexB. It depends on Mg(2+) as a cofactor.

It catalyses the reaction Couples ATP hydrolysis with the unwinding of duplex DNA by translocating in the 3'-5' direction.. It carries out the reaction ATP + H2O = ADP + phosphate + H(+). In terms of biological role, the heterodimer acts as both an ATP-dependent DNA helicase and an ATP-dependent, dual-direction single-stranded exonuclease. Recognizes the chi site generating a DNA molecule suitable for the initiation of homologous recombination. The AddA nuclease domain is required for chi fragment generation; this subunit has the helicase and 3' -&gt; 5' nuclease activities. This is ATP-dependent helicase/nuclease subunit A from Desulfitobacterium hafniense (strain Y51).